Reading from the N-terminus, the 175-residue chain is Anterior gradient protein 2 homolog (175 aa).

The N-terminal stretch at 1–20 (MEKIPVSAFLLLVALSYTLA) is a signal peptide. The required to promote cell adhesion stretch occupies residues 21-40 (RDTTVKPGAKKDTKDSRPKL). 2 short sequence motifs (homodimer stabilization; interchain) span residues 45–54 (SRGWGDQLIW) and 60–67 (EALYKSKT).

The protein belongs to the AGR family. As to quaternary structure, monomer and homodimer. Interacts with LYPD3 and DAG1 (alphaDAG1). Interacts with MUC2; disulfide-linked. Expressed strongly in trachea, lung, stomach, colon, prostate and small intestine. Expressed weakly in pituitary gland, salivary gland, mammary gland, bladder, appendix, ovary, fetal lung, uterus, pancreas, kidney, fetal kidney, testis, placenta, thyroid gland and in estrogen receptor (ER)-positive breast cancer cell lines.

Its subcellular location is the secreted. The protein resides in the endoplasmic reticulum. Required for MUC2 post-transcriptional synthesis and secretion. May play a role in the production of mucus by intestinal cells. Proto-oncogene that may play a role in cell migration, cell differentiation and cell growth. Promotes cell adhesion. The chain is Anterior gradient protein 2 homolog (AGR2) from Homo sapiens (Human).